Reading from the N-terminus, the 81-residue chain is MKLTCVIIVVALFLTACHAKDKQEHPAVRGSDDMQDSEDLKLAKKCTVDSDFCDPDNHDCCSGRCIDEGGSGVCAIVPVLN.

The signal sequence occupies residues 1–19 (MKLTCVIIVVALFLTACHA). Residues 20–43 (KDKQEHPAVRGSDDMQDSEDLKLA) constitute a propeptide that is removed on maturation. 3 disulfide bridges follow: cysteine 46-cysteine 61, cysteine 53-cysteine 65, and cysteine 60-cysteine 74.

It belongs to the conotoxin O1 superfamily. As to expression, expressed by the venom duct.

It localises to the secreted. This is Conotoxin ArMKLT2-01 from Conus arenatus (Sand-dusted cone).